A 238-amino-acid chain; its full sequence is tRNA (guanine-N(7)-)-methyltransferase (238 aa).

4 residues coordinate S-adenosyl-L-methionine: glutamate 68, glutamate 93, aspartate 120, and aspartate 143. Aspartate 143 is a catalytic residue. Substrate contacts are provided by residues lysine 147, aspartate 179, and 216–219; that span reads TKFE.

The protein belongs to the class I-like SAM-binding methyltransferase superfamily. TrmB family.

It carries out the reaction guanosine(46) in tRNA + S-adenosyl-L-methionine = N(7)-methylguanosine(46) in tRNA + S-adenosyl-L-homocysteine. It functions in the pathway tRNA modification; N(7)-methylguanine-tRNA biosynthesis. Its function is as follows. Catalyzes the formation of N(7)-methylguanine at position 46 (m7G46) in tRNA. This chain is tRNA (guanine-N(7)-)-methyltransferase, found in Stutzerimonas stutzeri (strain A1501) (Pseudomonas stutzeri).